A 79-amino-acid chain; its full sequence is Immunity protein CdiI (79 aa).

2 helical membrane passes run 12–32 and 51–71; these read IIFFPMLCTVLGLLGIPIGLI and VVLFTLKIGIPIGFILGLGLW.

In terms of assembly, probably interacts with cognate toxin CdiA.

The protein localises to the cell inner membrane. In terms of biological role, immunity protein component of a toxin-immunity protein module, which functions as a cellular contact-dependent growth inhibition (CDI) system. CDI modules allow bacteria to communicate with and inhibit the growth of closely related neighboring bacteria in a contact-dependent fashion. Protects cells against CdiA from the same strain, its cognate toxin protein. Growth inhibition is reversible upon induction of this protein, occurring about 2.5 hours after induction, and requires an energy source. Does not protect against non-cognate CdiA from E.coli strain 563 / UPEC, D.dadantii strain 3937 or Y.pestis strain CO92. The protein is Immunity protein CdiI of Escherichia coli.